A 296-amino-acid polypeptide reads, in one-letter code: Homoserine kinase (296 aa).

85–95 is an ATP binding site; sequence PVARGLGSSAA.

It belongs to the GHMP kinase family. Homoserine kinase subfamily.

The protein resides in the cytoplasm. The catalysed reaction is L-homoserine + ATP = O-phospho-L-homoserine + ADP + H(+). Its pathway is amino-acid biosynthesis; L-threonine biosynthesis; L-threonine from L-aspartate: step 4/5. Functionally, catalyzes the ATP-dependent phosphorylation of L-homoserine to L-homoserine phosphate. This is Homoserine kinase from Moorella thermoacetica (strain ATCC 39073 / JCM 9320).